Here is a 148-residue protein sequence, read N- to C-terminus: Ubiquitin-conjugating enzyme E2 5B (148 aa).

Positions 1–147 constitute a UBC core domain; that stretch reads MASKRILKEL…ARSWTQKYAM (147 aa). Cys85 functions as the Glycyl thioester intermediate in the catalytic mechanism.

This sequence belongs to the ubiquitin-conjugating enzyme family.

It carries out the reaction S-ubiquitinyl-[E1 ubiquitin-activating enzyme]-L-cysteine + [E2 ubiquitin-conjugating enzyme]-L-cysteine = [E1 ubiquitin-activating enzyme]-L-cysteine + S-ubiquitinyl-[E2 ubiquitin-conjugating enzyme]-L-cysteine.. It participates in protein modification; protein ubiquitination. In terms of biological role, E2 conjugating enzyme that associates with the E3 ubiquitin-protein ligase EL5 to mediate ubiquitination of target proteins. In Oryza sativa subsp. japonica (Rice), this protein is Ubiquitin-conjugating enzyme E2 5B (UBC5B).